Consider the following 183-residue polypeptide: MFTCKVNEHITIRLLEPKDAERLAELIIQNQQRLGKWLFFAENPSSADTYRETIIPDWRRQYADLNGIEAGLLYDGSLCGMISLHNLDQVNRKAEIGYWIAKEFEGKGIITAACRKLITYAFEELELNRVAICAAVGNEKSRAVPERIGFLEEGKARDGLYVNGMHHDLVYYSLLKREWEGEK.

Positions 10 to 176 (ITIRLLEPKD…HDLVYYSLLK (167 aa)) constitute an N-acetyltransferase domain.

It belongs to the acetyltransferase family. Homohexamer, and homodimer.

In terms of biological role, putative N-acetyltransferase. May act on ribosomal proteins (Potential). In Bacillus subtilis (strain 168), this protein is Putative ribosomal N-acetyltransferase YdaF (ydaF).